Reading from the N-terminus, the 444-residue chain is Chromosome partition protein MukF (444 aa).

Residues 211 to 239 form a leucine-zipper region; sequence LDETSGNLRELQDTLNAAGDKLQAQLLRI.

Belongs to the MukF family. Interacts, and probably forms a ternary complex, with MukE and MukB via its C-terminal region. The complex formation is stimulated by calcium or magnesium. It is required for an interaction between MukE and MukB.

Its subcellular location is the cytoplasm. The protein localises to the nucleoid. Involved in chromosome condensation, segregation and cell cycle progression. May participate in facilitating chromosome segregation by condensation DNA from both sides of a centrally located replisome during cell division. Not required for mini-F plasmid partitioning. Probably acts via its interaction with MukB and MukE. Overexpression results in anucleate cells. It has a calcium binding activity. The sequence is that of Chromosome partition protein MukF from Actinobacillus succinogenes (strain ATCC 55618 / DSM 22257 / CCUG 43843 / 130Z).